Reading from the N-terminus, the 617-residue chain is Dihydroxy-acid dehydratase (617 aa).

D81 serves as a coordination point for Mg(2+). Position 122 (C122) interacts with [2Fe-2S] cluster. Residues D123 and K124 each coordinate Mg(2+). An N6-carboxylysine modification is found at K124. Residue C195 participates in [2Fe-2S] cluster binding. E491 contributes to the Mg(2+) binding site. Residue S517 is the Proton acceptor of the active site.

This sequence belongs to the IlvD/Edd family. As to quaternary structure, homodimer. It depends on [2Fe-2S] cluster as a cofactor. Mg(2+) is required as a cofactor.

The catalysed reaction is (2R)-2,3-dihydroxy-3-methylbutanoate = 3-methyl-2-oxobutanoate + H2O. The enzyme catalyses (2R,3R)-2,3-dihydroxy-3-methylpentanoate = (S)-3-methyl-2-oxopentanoate + H2O. It functions in the pathway amino-acid biosynthesis; L-isoleucine biosynthesis; L-isoleucine from 2-oxobutanoate: step 3/4. The protein operates within amino-acid biosynthesis; L-valine biosynthesis; L-valine from pyruvate: step 3/4. Its function is as follows. Functions in the biosynthesis of branched-chain amino acids. Catalyzes the dehydration of (2R,3R)-2,3-dihydroxy-3-methylpentanoate (2,3-dihydroxy-3-methylvalerate) into 2-oxo-3-methylpentanoate (2-oxo-3-methylvalerate) and of (2R)-2,3-dihydroxy-3-methylbutanoate (2,3-dihydroxyisovalerate) into 2-oxo-3-methylbutanoate (2-oxoisovalerate), the penultimate precursor to L-isoleucine and L-valine, respectively. In Rhodospirillum rubrum (strain ATCC 11170 / ATH 1.1.1 / DSM 467 / LMG 4362 / NCIMB 8255 / S1), this protein is Dihydroxy-acid dehydratase.